The chain runs to 337 residues: PHD finger protein 11 (337 aa).

A C2HC pre-PHD-type zinc finger spans residues 42 to 78; sequence KRICALCPKDLECSVLYFAQSENIAAHENCLLYSSAL. The PHD-type zinc-finger motif lies at 108-160; sequence LKCTFCGKKGATVGCDLKSCFKNYHFFCAKNDHAVLQADGRTGIYKVFCQQHA.

As to quaternary structure, interacts with BRCA1 and RELA.

It localises to the nucleus. Functionally, positive regulator of Th1-type cytokine gene expression. This Bos taurus (Bovine) protein is PHD finger protein 11 (PHF11).